Reading from the N-terminus, the 341-residue chain is N-acetyl-gamma-glutamyl-phosphate reductase (341 aa).

Residue cysteine 163 is part of the active site.

This sequence belongs to the NAGSA dehydrogenase family. Type 1 subfamily.

The protein resides in the cytoplasm. It catalyses the reaction N-acetyl-L-glutamate 5-semialdehyde + phosphate + NADP(+) = N-acetyl-L-glutamyl 5-phosphate + NADPH + H(+). It participates in amino-acid biosynthesis; L-arginine biosynthesis; N(2)-acetyl-L-ornithine from L-glutamate: step 3/4. Catalyzes the NADPH-dependent reduction of N-acetyl-5-glutamyl phosphate to yield N-acetyl-L-glutamate 5-semialdehyde. This Idiomarina loihiensis (strain ATCC BAA-735 / DSM 15497 / L2-TR) protein is N-acetyl-gamma-glutamyl-phosphate reductase.